A 581-amino-acid chain; its full sequence is Coiled-coil domain-containing protein 102A (581 aa).

Disordered regions lie at residues Met-1–Cys-61, Gln-156–Asp-219, Gln-496–Glu-517, and Ser-534–Pro-581. Positions Thr-39–Leu-59 are enriched in low complexity. A coiled-coil region spans residues Arg-70–Ser-164. Residues Glu-161–Asn-184 are compositionally biased toward polar residues. The span at Gln-185–Arg-202 shows a compositional bias: basic and acidic residues. The stretch at Ala-270–Asn-541 forms a coiled coil. The span at Glu-559–Pro-581 shows a compositional bias: acidic residues.

The polypeptide is Coiled-coil domain-containing protein 102A (ccdc102a) (Danio rerio (Zebrafish)).